The following is a 350-amino-acid chain: MKKIRLELVYLRAIICAIIIITHLLTQITLKHENMEGGSLVLQFYIRNIVIFGTPCFIILSQLLTTLNYQKVTYRYLTTRVKYILIPYILMGLFYSYSESLLTDSSFNKQFIENVLLGQWYGYFIVVIMQFFILSYIIFKINYNLFNSKILLLLSFILQQSFLYYFTNNTAFHDTVLHYYPLSENTIIFGWIFYFFLGAYMGYNYERVLNFLERYLVIMIVLAVATYFVFIALANGDYWNVTSFSYSLTPYNSIMFIVILGICTHFKTMLFNTIQMISAFSFFIYLLHPIILDSLFAYTNIFEDNTMVFLAISLLFILGLCIGVGMILREFYIFRFIIGKQPYKLNINAY.

The next 10 helical transmembrane spans lie at 8–28 (LVYL…LTQI), 40–60 (LVLQ…FIIL), 83–103 (YILI…SLLT), 119–139 (QWYG…YIIF), 146–166 (FNSK…LYYF), 182–202 (LSEN…AYMG), 216–236 (LVIM…LANG), 254–274 (IMFI…FNTI), 276–296 (MISA…DSLF), and 308–328 (VFLA…GMIL).

Belongs to the acyltransferase 3 family.

It is found in the cell membrane. Its function is as follows. Presumably involved in the export of the biofilm adhesin polysaccharide poly-beta-1,6-N-acetyl-D-glucosamine (PNAG, also referred to as PIA) across the cell membrane. In Staphylococcus aureus (strain NCTC 8325 / PS 47), this protein is Probable poly-beta-1,6-N-acetyl-D-glucosamine export protein (icaC).